The sequence spans 100 residues: Conantokin-G (100 aa).

Residues 1–21 (MHLYTYLYLLVPLVTFHLILG) form the signal peptide. The propeptide occupies 22–80 (TGTLDDGGALTERRSADATALKAEPVLLQKSAARSTDDNGKDRLTQMKRILKQRGNKAR). The disordered stretch occupies residues 52–100 (SAARSTDDNGKDRLTQMKRILKQRGNKARGEEELQENQELIREKSNGKR). Basic and acidic residues predominate over residues 56-66 (STDDNGKDRLT). Residues 61–80 (GKDRLTQMKRILKQRGNKAR) are gamma-carboxylation recognition sequence that plays a role in the conversion of Glu to carboxy-Glu (Gla). E83 contributes to the a divalent metal cation binding site. 4-carboxyglutamate occurs at positions 83, 84, 87, 90, and 94. The a divalent metal cation site is built by E87, E90, and E94. Over residues 90 to 100 (ELIREKSNGKR) the composition is skewed to basic and acidic residues. An Asparagine amide modification is found at N97.

This sequence belongs to the conotoxin B superfamily. Ca(2+) is required as a cofactor. Requires Mg(2+) as cofactor. As to expression, expressed by the venom duct.

The protein localises to the secreted. In terms of biological role, conantokins inhibit N-methyl-D-aspartate (NMDA) receptors. This toxin is selective for the NR2B/GRIN2B subunit. Induces sleep-like symptoms in young mice and hyperactivity in older mice. The protein is Conantokin-G of Conus geographus (Geography cone).